A 526-amino-acid polypeptide reads, in one-letter code: Adenylosuccinate synthetase (526 aa).

GTP contacts are provided by residues 102–108 and 130–132; these read GDEGKGK and GHT. Catalysis depends on Asp103, which acts as the Proton acceptor. Asp103 and Gly130 together coordinate Mg(2+). IMP contacts are provided by residues 103-106, 128-131, Thr219, Arg233, Asn310, Thr325, and Arg392; these read DEGK and NAGH. Catalysis depends on His131, which acts as the Proton donor. Residue 388-394 participates in substrate binding; that stretch reads TTTGRTR. GTP-binding positions include Arg394, 420 to 422, and 502 to 504; these read KVD and GVG.

It belongs to the adenylosuccinate synthetase family. As to quaternary structure, homodimer. It depends on Mg(2+) as a cofactor.

It is found in the cytoplasm. It carries out the reaction IMP + L-aspartate + GTP = N(6)-(1,2-dicarboxyethyl)-AMP + GDP + phosphate + 2 H(+). Its pathway is purine metabolism; AMP biosynthesis via de novo pathway; AMP from IMP: step 1/2. Its function is as follows. Plays an important role in the de novo pathway and in the salvage pathway of purine nucleotide biosynthesis. Catalyzes the first committed step in the biosynthesis of AMP from IMP. The sequence is that of Adenylosuccinate synthetase from Phaeodactylum tricornutum (strain CCAP 1055/1).